The following is a 290-amino-acid chain: Acetyl-coenzyme A carboxylase carboxyl transferase subunit beta (290 aa).

One can recognise a CoA carboxyltransferase N-terminal domain in the interval 27-290 (LWHKCPSCEA…FTHSPSPVSA (264 aa)). Residues cysteine 31, cysteine 34, cysteine 50, and cysteine 53 each contribute to the Zn(2+) site. The segment at 31 to 53 (CPSCEAVLYRPELEKTLDVCPKC) adopts a C4-type zinc-finger fold.

Belongs to the AccD/PCCB family. As to quaternary structure, acetyl-CoA carboxylase is a heterohexamer composed of biotin carboxyl carrier protein (AccB), biotin carboxylase (AccC) and two subunits each of ACCase subunit alpha (AccA) and ACCase subunit beta (AccD). Zn(2+) serves as cofactor.

The protein localises to the cytoplasm. It catalyses the reaction N(6)-carboxybiotinyl-L-lysyl-[protein] + acetyl-CoA = N(6)-biotinyl-L-lysyl-[protein] + malonyl-CoA. Its pathway is lipid metabolism; malonyl-CoA biosynthesis; malonyl-CoA from acetyl-CoA: step 1/1. Component of the acetyl coenzyme A carboxylase (ACC) complex. Biotin carboxylase (BC) catalyzes the carboxylation of biotin on its carrier protein (BCCP) and then the CO(2) group is transferred by the transcarboxylase to acetyl-CoA to form malonyl-CoA. The chain is Acetyl-coenzyme A carboxylase carboxyl transferase subunit beta from Pseudomonas paraeruginosa (strain DSM 24068 / PA7) (Pseudomonas aeruginosa (strain PA7)).